Consider the following 313-residue polypeptide: Olfactory receptor 1J1 (313 aa).

The Extracellular segment spans residues 1–25; that stretch reads MRLKNHSSVSEFLLLGFPIRPEQGG. A glycan (N-linked (GlcNAc...) asparagine) is linked at Asn-5. The helical transmembrane segment at 26–46 threads the bilayer; it reads IFFSLFLAMYLITVLGNLLII. Residues 47–57 are Cytoplasmic-facing; the sequence is LLIRLDSHLHT. A helical membrane pass occupies residues 58 to 78; the sequence is PMYFFLSHLAFTDISFSSVTV. Over 79-97 the chain is Extracellular; sequence PKMLTKVQNQPIPITYEEC. Cys-97 and Cys-189 form a disulfide bridge. A helical membrane pass occupies residues 98 to 118; the sequence is VSQTYFFIFFADLDSFLITSM. Residues 119 to 142 are Cytoplasmic-facing; that stretch reads AYDRYMAICHPLHYITIMSQSRCA. Residues 143 to 163 form a helical membrane-spanning segment; that stretch reads MLVAVSWVIASACALLHSLLL. At 164–196 the chain is on the extracellular side; the sequence is DQLSFCADHTVPHFFCDLGALLKLSCSDTSLNQ. A helical membrane pass occupies residues 197–217; that stretch reads LVIFTAGLAAIMLPFLCILIS. Residues 218–240 lie on the Cytoplasmic side of the membrane; sequence YGRIGFTILQVPTTKGICKALST. A helical membrane pass occupies residues 241-261; the sequence is CGSHLSVVALYYGSIIGLYFL. The Extracellular segment spans residues 262–271; the sequence is PPSNSKINNN. Residues 272 to 292 traverse the membrane as a helical segment; it reads IVASVMYTVVTPMLNPFIYSL. Over 293 to 313 the chain is Cytoplasmic; the sequence is RNKDMKGALKKLLSKKTEFSK.

Belongs to the G-protein coupled receptor 1 family.

Its subcellular location is the cell membrane. Odorant receptor. The chain is Olfactory receptor 1J1 from Mus musculus (Mouse).